A 101-amino-acid chain; its full sequence is MAKKSAVARENKRRRLVEANYKKRSELRNIAKSLTASEEEKENARVALNKMRRDTAHIRLHNRCLLTGRPRGYLRKFAISRICFREMASMGEIPGVIKASW.

Belongs to the universal ribosomal protein uS14 family. As to quaternary structure, part of the 30S ribosomal subunit. Contacts proteins S3 and S10.

In terms of biological role, binds 16S rRNA, required for the assembly of 30S particles and may also be responsible for determining the conformation of the 16S rRNA at the A site. This chain is Small ribosomal subunit protein uS14, found in Chlamydia caviae (strain ATCC VR-813 / DSM 19441 / 03DC25 / GPIC) (Chlamydophila caviae).